A 175-amino-acid polypeptide reads, in one-letter code: Chromobox protein homolog hpl-2 (175 aa).

The region spanning 19–78 (FMVEKVLDKRTGKAGRDEFLIQWQGFPESDSSWEPRENLQCVEMLDEFEREFSKREKPIR) is the Chromo domain. The tract at residues 71 to 109 (SKREKPIRKRHSQKPEPSEDQADPEEDKDEKKETNQNDK) is disordered. The segment covering 88–98 (SEDQADPEEDK) has biased composition (acidic residues). Positions 99 to 109 (DEKKETNQNDK) are enriched in basic and acidic residues. The region spanning 115–172 (KQLKCIVGLTKGPGELHFLCKFSDDTARLLPAKEVNSRYPSQVIRYYESKLTIQDPKA) is the Chromo 2; shadow subtype domain.

In terms of assembly, interacts with histone H3 when di-, or tri-methylated at 'Lys-27' (H3K27me2/me3), or tri-methylated at 'Lys-9' (H3K9me3). Interacts with Tar DNA-binding protein homolog tdp-1; interaction may maintain localization of hpl-2 to gene bodies. Interacts with histone H1 his-24, probably via interaction with hpl-1. Interacts with chromobox protein homolog hpl-1. As to quaternary structure, may form homodimers. Interacts (via chromo (shadow subtype) domain) with zinc finger protein lin-13 (via PLVPV motif); the interaction is direct and influences localization of hpl-2 to nuclear foci.

The protein localises to the nucleus. It is found in the chromosome. Its function is as follows. Seems to be involved in transcriptional silencing in heterochromatin-like complexes. Probably does not act as global transcriptional repressor, instead targeting a subset of genes. Involved in RNA processing mediated by Tar DNA-binding protein homolog tdp-1. Plays a role in linking epigenetic regulation with the innate immune response. Involved in the endoplasmic reticulum (ER) stress response via modulation of the unfolded protein response (UPR), acting mainly through the IRE1-XBP1 pathway and perhaps, to a lesser extent, through the autophagy pathway. May act in a common pathway with retinoblastoma-like protein homolog lin-35 and zinc finger protein lin-13 to influence the ER stress response in the intestine. Plays a role in the formation of the vulva and in fertility, acting together with a CoREST-like complex, and chromobox protein homolog hpl-1. Acting in concert with hpl-1 and histone H1 protein his-24, involved in reproduction, somatic gonad development, male tail development and vulval cell fate specification; perhaps as a result of modulating expression of Hox genes mab-5 and egl-5. In vulval cell fate specification may act by repressing transcription, of EGF family gene lin-3 in hypodermal hyp7, and of homeobox lin-39 in vulval precursor cells (VPC). Role in growth and somatic gonad development is antagonized by histone-lysine N-methyltransferase set-2/SET1. Required for larval development, acting redundantly with hpl-1. Plays a role in regulation of the developmentally arrested larval state known as dauer, longevity, and lipid metabolism. The chain is Chromobox protein homolog hpl-2 from Caenorhabditis elegans.